The chain runs to 450 residues: Tubulin beta-6 chain (450 aa).

GTP contacts are provided by Gln11, Glu71, Ser140, Gly144, Thr145, Gly146, Asn206, and Asn228. Residue Glu71 participates in Mg(2+) binding. Residues 429–450 (DATVEDEEEYEGEEGLDENYET) form a disordered region. The segment covering 431 to 450 (TVEDEEEYEGEEGLDENYET) has biased composition (acidic residues).

It belongs to the tubulin family. As to quaternary structure, dimer of alpha and beta chains. A typical microtubule is a hollow water-filled tube with an outer diameter of 25 nm and an inner diameter of 15 nM. Alpha-beta heterodimers associate head-to-tail to form protofilaments running lengthwise along the microtubule wall with the beta-tubulin subunit facing the microtubule plus end conferring a structural polarity. Microtubules usually have 13 protofilaments but different protofilament numbers can be found in some organisms and specialized cells. Mg(2+) serves as cofactor.

It is found in the cytoplasm. It localises to the cytoskeleton. Its function is as follows. Tubulin is the major constituent of microtubules, a cylinder consisting of laterally associated linear protofilaments composed of alpha- and beta-tubulin heterodimers. Microtubules grow by the addition of GTP-tubulin dimers to the microtubule end, where a stabilizing cap forms. Below the cap, tubulin dimers are in GDP-bound state, owing to GTPase activity of alpha-tubulin. This chain is Tubulin beta-6 chain, found in Gossypium hirsutum (Upland cotton).